The primary structure comprises 410 residues: Peptidase T (410 aa).

His-79 is a binding site for Zn(2+). The active site involves Asp-81. Position 142 (Asp-142) interacts with Zn(2+). Glu-176 (proton acceptor) is an active-site residue. Zn(2+) is bound by residues Glu-177, Asp-199, and His-381.

The protein belongs to the peptidase M20B family. It depends on Zn(2+) as a cofactor.

The protein localises to the cytoplasm. The catalysed reaction is Release of the N-terminal residue from a tripeptide.. Its function is as follows. Cleaves the N-terminal amino acid of tripeptides. This is Peptidase T from Bacillus cereus (strain G9842).